Consider the following 377-residue polypeptide: tRNA(Met) cytidine acetate ligase (377 aa).

ATP-binding positions include 7–20 (ITEY…HLYH), G101, N152, and R179.

It belongs to the TmcAL family.

Its subcellular location is the cytoplasm. It catalyses the reaction cytidine(34) in elongator tRNA(Met) + acetate + ATP = N(4)-acetylcytidine(34) in elongator tRNA(Met) + AMP + diphosphate. In terms of biological role, catalyzes the formation of N(4)-acetylcytidine (ac(4)C) at the wobble position of elongator tRNA(Met), using acetate and ATP as substrates. First activates an acetate ion to form acetyladenylate (Ac-AMP) and then transfers the acetyl group to tRNA to form ac(4)C34. The protein is tRNA(Met) cytidine acetate ligase of Oenococcus oeni (strain ATCC BAA-331 / PSU-1).